The chain runs to 187 residues: dTTP/UTP pyrophosphatase (187 aa).

The active-site Proton acceptor is Asp72.

This sequence belongs to the Maf family. YhdE subfamily. The cofactor is a divalent metal cation.

It localises to the cytoplasm. The enzyme catalyses dTTP + H2O = dTMP + diphosphate + H(+). It catalyses the reaction UTP + H2O = UMP + diphosphate + H(+). Nucleoside triphosphate pyrophosphatase that hydrolyzes dTTP and UTP. May have a dual role in cell division arrest and in preventing the incorporation of modified nucleotides into cellular nucleic acids. This is dTTP/UTP pyrophosphatase from Vibrio cholerae serotype O1 (strain ATCC 39315 / El Tor Inaba N16961).